The sequence spans 192 residues: Interferon epsilon (192 aa).

Residues 1-21 (MVHRQLPETVLLLLVSSTIFS) form the signal peptide. Cysteines 52 and 162 form a disulfide.

The protein belongs to the alpha/beta interferon family. As to expression, expressed at very high levels in uterus and, at much lower levels, in ovary and cervix. Very low levels, if any, in other organs. In the endometrium, expressed in the luminal and glandular epithelial cells (at protein level).

The protein resides in the secreted. Its function is as follows. Type I interferon required for maintaining basal levels of IFN-regulated genes, including 2'-5'-oligoadenylate synthetase, IRF7 and ISG15, in the female reproductive tract. Directly mediates protection against viral, including HSV-2, and bacterial, including Chlamydia muridarum, genital infections. The protein is Interferon epsilon (Ifne) of Mus musculus (Mouse).